The following is a 130-amino-acid chain: Anti-adapter protein IraD (130 aa).

Belongs to the GpW/Gp25 family. IraD subfamily. In terms of assembly, interacts with RssB.

The protein resides in the cytoplasm. Inhibits RpoS proteolysis by regulating RssB activity, thereby increasing the stability of the sigma stress factor RpoS during oxidative stress. Its effect on RpoS stability is due to its interaction with RssB, which probably blocks the interaction of RssB with RpoS, and the consequent delivery of the RssB-RpoS complex to the ClpXP protein degradation pathway. This Shigella boydii serotype 4 (strain Sb227) protein is Anti-adapter protein IraD.